Reading from the N-terminus, the 194-residue chain is dCTP deaminase (194 aa).

DCTP is bound by residues 110-115 (RSSLAR), aspartate 128, 136-138 (VLE), tyrosine 171, lysine 178, and glutamine 182. The active-site Proton donor/acceptor is the glutamate 138. The disordered stretch occupies residues 172–194 (NKRKSAKYRDQQEAVASRISQDK).

Belongs to the dCTP deaminase family. As to quaternary structure, homotrimer.

The enzyme catalyses dCTP + H2O + H(+) = dUTP + NH4(+). The protein operates within pyrimidine metabolism; dUMP biosynthesis; dUMP from dCTP (dUTP route): step 1/2. In terms of biological role, catalyzes the deamination of dCTP to dUTP. This chain is dCTP deaminase, found in Shewanella loihica (strain ATCC BAA-1088 / PV-4).